Here is a 54-residue protein sequence, read N- to C-terminus: Glutathione S-transferase 6.7 (54 aa).

The protein belongs to the GST superfamily. Theta family. Homodimer. The N-terminus is blocked.

It is found in the cytoplasm. The catalysed reaction is RX + glutathione = an S-substituted glutathione + a halide anion + H(+). Conjugation of reduced glutathione to a wide number of exogenous and endogenous hydrophobic electrophiles. The chain is Glutathione S-transferase 6.7 from Dicentrarchus labrax (European seabass).